Here is a 421-residue protein sequence, read N- to C-terminus: Synaptotagmin-1 (421 aa).

The disordered stretch occupies residues 1-40 (MVSESHHEALAAPPATTVAAAPPSNVTEPASPGGGGGKED). Topologically, residues 1-60 (MVSESHHEALAAPPATTVAAAPPSNVTEPASPGGGGGKEDAFSKLKEKFMNELNKIPLPP) are vesicular. Residues 10-23 (LAAPPATTVAAAPP) are compositionally biased toward low complexity. The N-linked (GlcNAc...) asparagine glycan is linked to N25. Residues 61 to 81 (WALIAIAIVAVLLILTCCFCL) form a helical membrane-spanning segment. 5 S-palmitoyl cysteine lipidation sites follow: C77, C78, C80, C82, and C85. The Cytoplasmic segment spans residues 82–421 (CKKCLFKKKN…EVDAMLAVKK (340 aa)). Positions 94 to 139 (KGKEKGGKNAINMKDVKDLGKTMKDQDDDAETGLTDGEEKEEPKEV) are disordered. Residues 107–118 (KDVKDLGKTMKD) are compositionally biased toward basic and acidic residues. The span at 119–133 (QDDDAETGLTDGEEK) shows a compositional bias: acidic residues. The tract at residues 135 to 381 (EPKEVEKLGK…AIGKVFVGYN (247 aa)) is phospholipid binding. 2 C2 domains span residues 141 to 260 (KLGK…EEWR) and 272 to 405 (KLGD…AQWH). The Ca(2+) site is built by L171, D172, D178, D230, F231, D232, S235, K236, D238, D303, D309, D363, D365, and D371.

Belongs to the synaptotagmin family. Homotetramer. It depends on Ca(2+) as a cofactor.

The protein resides in the cytoplasmic vesicle. The protein localises to the secretory vesicle membrane. It localises to the secretory vesicle. It is found in the synaptic vesicle membrane. Its subcellular location is the chromaffin granule membrane. The protein resides in the cytoplasm. Its function is as follows. Calcium sensor that participates in triggering neurotransmitter release at the synapse. May have a regulatory role in the membrane interactions during trafficking of synaptic vesicles at the active zone of the synapse. It binds acidic phospholipids with a specificity that requires the presence of both an acidic head group and a diacyl backbone. May play a role in dendrite formation by melanocytes. May play a role in regulating the secretion of hormones relevant to the reproduction and egg-laying of female geese. The protein is Synaptotagmin-1 of Anser cygnoides (Swan goose).